Reading from the N-terminus, the 355-residue chain is Protein RecA (355 aa).

Residue 65–72 (GPESSGKT) participates in ATP binding.

It belongs to the RecA family.

It localises to the cytoplasm. Its function is as follows. Can catalyze the hydrolysis of ATP in the presence of single-stranded DNA, the ATP-dependent uptake of single-stranded DNA by duplex DNA, and the ATP-dependent hybridization of homologous single-stranded DNAs. It interacts with LexA causing its activation and leading to its autocatalytic cleavage. The chain is Protein RecA from Pseudomonas putida (Arthrobacter siderocapsulatus).